The sequence spans 665 residues: RNA-directed RNA polymerase (665 aa).

Positions 310–485 (NKEEKVKEWS…LKEGKVNPSP (176 aa)) constitute a RdRp catalytic domain. 3 residues coordinate Mg(2+): Asp454, Tyr491, and Gly495.

Part of the packaging complex composed of RDRP, P4 and P7. Interacts with P7. It depends on Mg(2+) as a cofactor. The cofactor is Mn(2+).

It is found in the virion. The enzyme catalyses RNA(n) + a ribonucleoside 5'-triphosphate = RNA(n+1) + diphosphate. In terms of biological role, rna-dependent RNA polymerase part of the packaging complex that packages the viral RNA segments, replicate them into a double-stranded form and transcribe them. This Pseudomonas phage phi6 (Bacteriophage phi-6) protein is RNA-directed RNA polymerase (P2).